The chain runs to 550 residues: Phosphatidylinositol 4-kinase gamma 2 (550 aa).

Ubiquitin-like domains lie at 34-111 (SVLV…YDPL) and 112-190 (LVTV…VEDT). The segment at 228–247 (VDGLNKGSPPVRSAEGTGGT) is disordered. The PI3K/PI4K catalytic domain maps to 234–532 (GSPPVRSAEG…SVLPASSEAT (299 aa)). Positions 240–246 (SAEGTGG) are G-loop. ATP-binding positions include 241-247 (AEGTGGT), Lys263, and 359-362 (QMFM). Positions 392-400 (ANADRHAGN) are catalytic loop. The tract at residues 415-441 (PIDHGYCLPENFEDCTFEWLYWPQAKL) is activation loop. Asp417 serves as a coordination point for ATP.

This sequence belongs to the PI3/PI4-kinase family. Type II PI4K subfamily.

Its subcellular location is the membrane. It catalyses the reaction a 1,2-diacyl-sn-glycero-3-phospho-(1D-myo-inositol) + ATP = a 1,2-diacyl-sn-glycero-3-phospho-(1D-myo-inositol 4-phosphate) + ADP + H(+). In terms of biological role, the phosphorylation of phosphatidylinositol (PI) to PI4P is the first committed step in the generation of phosphatidylinositol 4,5-bisphosphate (PIP2), a precursor of the second messenger inositol 1,4,5-trisphosphate (InsP3). This Arabidopsis thaliana (Mouse-ear cress) protein is Phosphatidylinositol 4-kinase gamma 2 (PI4KG2).